We begin with the raw amino-acid sequence, 356 residues long: DNA polymerase IV (356 aa).

Residues 7–188 (IIHIDMDAFY…IPVTKFYGVG (182 aa)) form the UmuC domain. Mg(2+)-binding residues include Asp-11 and Asp-106. Glu-107 is a catalytic residue.

The protein belongs to the DNA polymerase type-Y family. As to quaternary structure, monomer. Requires Mg(2+) as cofactor.

It localises to the cytoplasm. The catalysed reaction is DNA(n) + a 2'-deoxyribonucleoside 5'-triphosphate = DNA(n+1) + diphosphate. In terms of biological role, poorly processive, error-prone DNA polymerase involved in untargeted mutagenesis. Copies undamaged DNA at stalled replication forks, which arise in vivo from mismatched or misaligned primer ends. These misaligned primers can be extended by PolIV. Exhibits no 3'-5' exonuclease (proofreading) activity. May be involved in translesional synthesis, in conjunction with the beta clamp from PolIII. In Listeria monocytogenes serotype 4b (strain CLIP80459), this protein is DNA polymerase IV.